Consider the following 61-residue polypeptide: Large ribosomal subunit protein bL32 (61 aa).

Belongs to the bacterial ribosomal protein bL32 family.

This is Large ribosomal subunit protein bL32 from Acidithiobacillus ferrooxidans (strain ATCC 23270 / DSM 14882 / CIP 104768 / NCIMB 8455) (Ferrobacillus ferrooxidans (strain ATCC 23270)).